Here is a 431-residue protein sequence, read N- to C-terminus: Enolase (431 aa).

Q163 contributes to the (2R)-2-phosphoglycerate binding site. The active-site Proton donor is the E205. Mg(2+) is bound by residues D242, E283, and D310. Residues K335, R364, S365, and K386 each coordinate (2R)-2-phosphoglycerate. K335 acts as the Proton acceptor in catalysis.

The protein belongs to the enolase family. The cofactor is Mg(2+).

It localises to the cytoplasm. The protein resides in the secreted. Its subcellular location is the cell surface. It carries out the reaction (2R)-2-phosphoglycerate = phosphoenolpyruvate + H2O. It functions in the pathway carbohydrate degradation; glycolysis; pyruvate from D-glyceraldehyde 3-phosphate: step 4/5. Functionally, catalyzes the reversible conversion of 2-phosphoglycerate (2-PG) into phosphoenolpyruvate (PEP). It is essential for the degradation of carbohydrates via glycolysis. This is Enolase from Kineococcus radiotolerans (strain ATCC BAA-149 / DSM 14245 / SRS30216).